The primary structure comprises 545 residues: Chaperonin GroEL 1 (545 aa).

ATP is bound by residues 30 to 33, Lys-51, 87 to 91, Gly-415, and Asp-495; these read TLGP and DGTTT.

Belongs to the chaperonin (HSP60) family. Forms a cylinder of 14 subunits composed of two heptameric rings stacked back-to-back. Interacts with the co-chaperonin GroES.

The protein localises to the cytoplasm. The enzyme catalyses ATP + H2O + a folded polypeptide = ADP + phosphate + an unfolded polypeptide.. Functionally, together with its co-chaperonin GroES, plays an essential role in assisting protein folding. The GroEL-GroES system forms a nano-cage that allows encapsulation of the non-native substrate proteins and provides a physical environment optimized to promote and accelerate protein folding. This Rhizobium meliloti (strain 1021) (Ensifer meliloti) protein is Chaperonin GroEL 1.